The chain runs to 346 residues: S-adenosylmethionine:tRNA ribosyltransferase-isomerase (346 aa).

It belongs to the QueA family. In terms of assembly, monomer.

Its subcellular location is the cytoplasm. It carries out the reaction 7-aminomethyl-7-carbaguanosine(34) in tRNA + S-adenosyl-L-methionine = epoxyqueuosine(34) in tRNA + adenine + L-methionine + 2 H(+). Its pathway is tRNA modification; tRNA-queuosine biosynthesis. Its function is as follows. Transfers and isomerizes the ribose moiety from AdoMet to the 7-aminomethyl group of 7-deazaguanine (preQ1-tRNA) to give epoxyqueuosine (oQ-tRNA). This is S-adenosylmethionine:tRNA ribosyltransferase-isomerase from Nitrosomonas eutropha (strain DSM 101675 / C91 / Nm57).